Reading from the N-terminus, the 87-residue chain is Small ribosomal subunit protein bS20 (87 aa).

The protein belongs to the bacterial ribosomal protein bS20 family.

Binds directly to 16S ribosomal RNA. This chain is Small ribosomal subunit protein bS20, found in Mycoplasma pneumoniae (strain ATCC 29342 / M129 / Subtype 1) (Mycoplasmoides pneumoniae).